The primary structure comprises 334 residues: uncharacterized protein (334 aa).

Transmembrane regions (helical) follow at residues 19 to 39 (AFLR…SFGI) and 55 to 75 (LIVL…AALF). Positions 308 to 334 (KPESKSSSQKSVETEIEKEVKDKLAKN) are disordered. A compositionally biased stretch (basic and acidic residues) spans 319–334 (VETEIEKEVKDKLAKN).

Its subcellular location is the cell membrane. This is an uncharacterized protein from Mycoplasma genitalium (strain ATCC 33530 / DSM 19775 / NCTC 10195 / G37) (Mycoplasmoides genitalium).